Here is a 1281-residue protein sequence, read N- to C-terminus: Zinc finger transcription factor Trps1 (1281 aa).

Residues 1 to 198 (MVRKKNPPLR…VPSDGGVRLN (198 aa)) form a disordered region. Residue Lys-29 forms a Glycyl lysine isopeptide (Lys-Gly) (interchain with G-Cter in SUMO2) linkage. A compositionally biased stretch (polar residues) spans 40 to 49 (DQMSENTDQS). Residues 53 to 63 (ELNHKEEHSLH) are compositionally biased toward basic and acidic residues. Lys-76 is covalently cross-linked (Glycyl lysine isopeptide (Lys-Gly) (interchain with G-Cter in SUMO2)). Phosphoserine occurs at positions 90 and 127. Residues 148-162 (LETKEDQKMSPKATE) show a composition bias toward basic and acidic residues. Polar residues predominate over residues 163–189 (ETGQAQSGQANCQGLSPVSVASKNPQV). Residues Ser-178 and Ser-216 each carry the phosphoserine modification. The C2H2-type 1; atypical zinc-finger motif lies at 222–247 (FKCNICGYGYYGNDPTDLIKHFRKYH). Lys-263 participates in a covalent cross-link: Glycyl lysine isopeptide (Lys-Gly) (interchain with G-Cter in SUMO2). The C2H2-type 2; atypical zinc-finger motif lies at 333–358 (FRCKFCNFTYMGNSSTELEQHFLQTH). The interval 365–394 (SLPSSEVAKPSEKNSNKSIPALQSSDSGDL) is disordered. Polar residues predominate over residues 380–391 (NKSIPALQSSDS). Glycyl lysine isopeptide (Lys-Gly) (interchain with G-Cter in SUMO2) cross-links involve residues Lys-418, Lys-457, Lys-474, and Lys-488. Positions 483-512 (QNDLAKSSEGETMTKTDKSSSGAKKKDFSS) are disordered. The span at 488-512 (KSSEGETMTKTDKSSSGAKKKDFSS) shows a compositional bias: basic and acidic residues. A C2H2-type 3; atypical zinc finger spans residues 614–637 (HQCHQCSFTTPDVDVLLFHYESVH). The tract at residues 635–819 (SVHESQASDV…SLGLLTPVSG (185 aa)) is mediates interaction with GLI3. A Glycyl lysine isopeptide (Lys-Gly) (interchain with G-Cter in SUMO2) cross-link involves residue Lys-645. 2 consecutive C2H2-type zinc fingers follow at residues 666-689 (HSCTKCDFITQVEEEISRHYRRAH) and 692-715 (YKCRQCSFTAADTQSLLEHFNTVH). A Glycyl lysine isopeptide (Lys-Gly) (interchain with G-Cter in SUMO2) cross-link involves residue Lys-737. Thr-751 carries the post-translational modification Phosphothreonine. Residue Lys-755 forms a Glycyl lysine isopeptide (Lys-Gly) (interchain with G-Cter in SUMO2) linkage. Lys-766 participates in a covalent cross-link: Glycyl lysine isopeptide (Lys-Gly) (interchain with G-Cter in SUMO1); alternate. Residue Lys-766 forms a Glycyl lysine isopeptide (Lys-Gly) (interchain with G-Cter in SUMO2); alternate linkage. Glycyl lysine isopeptide (Lys-Gly) (interchain with G-Cter in SUMO2) cross-links involve residues Lys-825, Lys-850, Lys-877, and Lys-879. The interval 856 to 887 (APAGGEKSGALPQQYPASGENKSKDESQSLLR) is disordered. Residues 896 to 920 (CANCLTTKTSLWRKNANGGYVCNAC) form a GATA-type zinc finger. Residues Lys-925, Lys-937, and Lys-965 each participate in a glycyl lysine isopeptide (Lys-Gly) (interchain with G-Cter in SUMO2) cross-link. Polar residues predominate over residues 961–977 (EQLNKQQRGSNEEQVNG). The tract at residues 961 to 1000 (EQLNKQQRGSNEEQVNGSPLERRSEDHLTESHQREIPLPS) is disordered. The residue at position 978 (Ser-978) is a Phosphoserine. Residues 980-995 (LERRSEDHLTESHQRE) are compositionally biased toward basic and acidic residues. The mediates interaction with RNF4 stretch occupies residues 985–1184 (EDHLTESHQR…PTANGASKEK (200 aa)). Residues Lys-1003, Lys-1012, Lys-1030, and Lys-1040 each participate in a glycyl lysine isopeptide (Lys-Gly) (interchain with G-Cter in SUMO2) cross-link. The segment at 1039 to 1080 (IKSPQESTGDPGNSSSVSEGKGSSERGSPIEKYMRPAKHPNY) is disordered. Residues 1040–1049 (KSPQESTGDP) show a composition bias toward polar residues. Ser-1041 is subject to Phosphoserine. Residues 1050–1059 (GNSSSVSEGK) show a composition bias toward low complexity. The segment covering 1060 to 1072 (GSSERGSPIEKYM) has biased composition (basic and acidic residues). Ser-1066 carries the phosphoserine modification. Lys-1070 participates in a covalent cross-link: Glycyl lysine isopeptide (Lys-Gly) (interchain with G-Cter in SUMO2). The residue at position 1085 (Ser-1085) is a Phosphoserine. Residues 1163–1281 (PLDLAIKHSR…QVEKNGKPKE (119 aa)) are transcriptional repressor domain. Residues 1168–1196 (IKHSRPGPTANGASKEKTKAPPNVKNEGP) are disordered. Residues Lys-1192 and Lys-1201 each participate in a glycyl lysine isopeptide (Lys-Gly) (interchain with G-Cter in SUMO2); alternate cross-link. Residues Lys-1192 and Lys-1201 each participate in a glycyl lysine isopeptide (Lys-Gly) (interchain with G-Cter in SUMO); alternate cross-link. Lys-1201 participates in a covalent cross-link: Glycyl lysine isopeptide (Lys-Gly) (interchain with G-Cter in SUMO1); alternate. C2H2-type zinc fingers lie at residues 1215-1237 (TKCVHCGIVFLDEVMYALHMSCH) and 1243-1267 (FQCSICQHLCTDKYDFTTHIQRGLH).

As to quaternary structure, interacts with RNF4; regulates TRPS1 repressor activity. Interacts specifically with the activator form of GLI3 (GLI3A) but not with the repressor form (GLI3R). Sumoylated. Sumoylation in the repressor domain inhibits the transcription repression activity. Sumoylation on Lys-1201 is the major site. Appears to be sumoylated on multiple sites. In terms of tissue distribution, ubiquitously expressed in the adult. Found in fetal brain, lung, kidney, liver, spleen and thymus. More highly expressed in androgen-dependent than in androgen-independent prostate cancer cells.

The protein resides in the nucleus. In terms of biological role, transcriptional repressor. Binds specifically to GATA sequences and represses expression of GATA-regulated genes at selected sites and stages in vertebrate development. Regulates chondrocyte proliferation and differentiation. Executes multiple functions in proliferating chondrocytes, expanding the region of distal chondrocytes, activating proliferation in columnar cells and supporting the differentiation of columnar into hypertrophic chondrocytes. The sequence is that of Zinc finger transcription factor Trps1 (TRPS1) from Homo sapiens (Human).